A 390-amino-acid chain; its full sequence is Phosphopentomutase (390 aa).

Residues Asp11, Asp283, His288, Asp324, His325, and His336 each contribute to the Mn(2+) site.

The protein belongs to the phosphopentomutase family. Mn(2+) serves as cofactor.

It localises to the cytoplasm. It catalyses the reaction 2-deoxy-alpha-D-ribose 1-phosphate = 2-deoxy-D-ribose 5-phosphate. The enzyme catalyses alpha-D-ribose 1-phosphate = D-ribose 5-phosphate. The protein operates within carbohydrate degradation; 2-deoxy-D-ribose 1-phosphate degradation; D-glyceraldehyde 3-phosphate and acetaldehyde from 2-deoxy-alpha-D-ribose 1-phosphate: step 1/2. Its function is as follows. Isomerase that catalyzes the conversion of deoxy-ribose 1-phosphate (dRib-1-P) and ribose 1-phosphate (Rib-1-P) to deoxy-ribose 5-phosphate (dRib-5-P) and ribose 5-phosphate (Rib-5-P), respectively. The polypeptide is Phosphopentomutase (Clostridium acetobutylicum (strain ATCC 824 / DSM 792 / JCM 1419 / IAM 19013 / LMG 5710 / NBRC 13948 / NRRL B-527 / VKM B-1787 / 2291 / W)).